The chain runs to 572 residues: Sulfite reductase [NADPH] hemoprotein beta-component (572 aa).

C437, C443, C482, and C486 together coordinate [4Fe-4S] cluster. A siroheme-binding site is contributed by C486.

Belongs to the nitrite and sulfite reductase 4Fe-4S domain family. Alpha(8)-beta(8). The alpha component is a flavoprotein, the beta component is a hemoprotein. The cofactor is siroheme. [4Fe-4S] cluster is required as a cofactor.

The catalysed reaction is hydrogen sulfide + 3 NADP(+) + 3 H2O = sulfite + 3 NADPH + 4 H(+). It functions in the pathway sulfur metabolism; hydrogen sulfide biosynthesis; hydrogen sulfide from sulfite (NADPH route): step 1/1. Functionally, component of the sulfite reductase complex that catalyzes the 6-electron reduction of sulfite to sulfide. This is one of several activities required for the biosynthesis of L-cysteine from sulfate. The chain is Sulfite reductase [NADPH] hemoprotein beta-component from Staphylococcus epidermidis (strain ATCC 35984 / DSM 28319 / BCRC 17069 / CCUG 31568 / BM 3577 / RP62A).